Reading from the N-terminus, the 192-residue chain is Amelogenin, Y isoform (192 aa).

Residues 1–16 form the signal peptide; that stretch reads MGTWILFACLLGAAYS. The tract at residues 73-192 is disordered; sequence QSPQNHALQP…TDKTKREEVD (120 aa). Positions 87–105 are enriched in low complexity; that stretch reads PMVPAQQPVVPQQPMMPVP. Over residues 108-117 the composition is skewed to polar residues; it reads HSMTPIQHHQ. The segment covering 132–173 has biased composition (pro residues); it reads PIQPQPHQPLQPQPPVHPIQRLPPQPPLPPIFPMQPLPPVLP.

Belongs to the amelogenin family.

It localises to the secreted. The protein resides in the extracellular space. The protein localises to the extracellular matrix. In terms of biological role, plays a role in the biomineralization of teeth. Seems to regulate the formation of crystallites during the secretory stage of tooth enamel development. Thought to play a major role in the structural organization and mineralization of developing enamel. This is Amelogenin, Y isoform (AMELY) from Bos taurus (Bovine).